The primary structure comprises 131 residues: Small ribosomal subunit protein uS11 (131 aa).

Belongs to the universal ribosomal protein uS11 family. In terms of assembly, part of the 30S ribosomal subunit. Interacts with proteins S7 and S18. Binds to IF-3.

Located on the platform of the 30S subunit, it bridges several disparate RNA helices of the 16S rRNA. Forms part of the Shine-Dalgarno cleft in the 70S ribosome. In Dictyoglomus turgidum (strain DSM 6724 / Z-1310), this protein is Small ribosomal subunit protein uS11.